A 563-amino-acid chain; its full sequence is Serine palmitoyltransferase 3 (563 aa).

Polar residues predominate over residues 1–29 (MANLNDSAVTNGTLHNPKTQQGKRQSTGC). Residues 1-32 (MANLNDSAVTNGTLHNPKTQQGKRQSTGCVKN) form a disordered region. A helical transmembrane segment spans residues 59–79 (PLYVYVLTYMGYGIGILFGYL). Lys-371 is modified (N6-(pyridoxal phosphate)lysine).

This sequence belongs to the class-II pyridoxal-phosphate-dependent aminotransferase family. As to quaternary structure, component of the serine palmitoyltransferase (SPT) complex, which is composed of SPTLC1, SPTLC2 or SPTLC3 and SPTSSA or SPTSSB. The heterodimer consisting of SPTLC1 and SPTLC2/SPTLC3 forms the catalytic core of the enzyme, while SPTSSA or SPTSSB subunits determine substrate specificity. SPT also interacts with ORMDL proteins, especially ORMDL3, which negatively regulate SPT activity in the presence of ceramides. Requires pyridoxal 5'-phosphate as cofactor. As to expression, expressed in white and brown adipose tissues.

The protein localises to the endoplasmic reticulum membrane. It catalyses the reaction L-serine + hexadecanoyl-CoA + H(+) = 3-oxosphinganine + CO2 + CoA. The enzyme catalyses dodecanoyl-CoA + L-serine + H(+) = 3-oxotetradecasphinganine + CO2 + CoA. The catalysed reaction is tetradecanoyl-CoA + L-serine + H(+) = 3-oxohexadecasphinganine + CO2 + CoA. It carries out the reaction octadecanoyl-CoA + L-serine + H(+) = 3-oxoeicosasphinganine + CO2 + CoA. The protein operates within lipid metabolism; sphingolipid metabolism. With respect to regulation, SPT complex catalytic activity is negatively regulated by ORMDL proteins, including ORMDL3, in the presence of ceramides. This mechanism allows to maintain ceramide levels at sufficient concentrations for the production of complex sphingolipids, but which prevents the accumulation of ceramides to levels that trigger apoptosis. Component of the serine palmitoyltransferase multisubunit enzyme (SPT) that catalyzes the initial and rate-limiting step in sphingolipid biosynthesis by condensing L-serine and activated acyl-CoA (most commonly palmitoyl-CoA) to form long-chain bases. The SPT complex is composed of SPTLC1, SPTLC2 or SPTLC3 and SPTSSA or SPTSSB. Within this complex, the heterodimer consisting of SPTLC1 and SPTLC2/SPTLC3 forms the catalytic core. The composition of the serine palmitoyltransferase (SPT) complex determines the substrate preference. The SPTLC1-SPTLC2-SPTSSA complex shows a strong preference for C16-CoA substrate, while the SPTLC1-SPTLC3-SPTSSA isozyme uses both C14-CoA and C16-CoA as substrates, with a slight preference for C14-CoA. The SPTLC1-SPTLC2-SPTSSB complex shows a strong preference for C18-CoA substrate, while the SPTLC1-SPTLC3-SPTSSB isozyme displays an ability to use a broader range of acyl-CoAs, without apparent preference. In Mus musculus (Mouse), this protein is Serine palmitoyltransferase 3.